The following is a 393-amino-acid chain: NAD(P)H-quinone oxidoreductase subunit H, chloroplastic (393 aa).

Belongs to the complex I 49 kDa subunit family. As to quaternary structure, NDH is composed of at least 16 different subunits, 5 of which are encoded in the nucleus.

Its subcellular location is the plastid. It localises to the chloroplast thylakoid membrane. The enzyme catalyses a plastoquinone + NADH + (n+1) H(+)(in) = a plastoquinol + NAD(+) + n H(+)(out). It carries out the reaction a plastoquinone + NADPH + (n+1) H(+)(in) = a plastoquinol + NADP(+) + n H(+)(out). Functionally, NDH shuttles electrons from NAD(P)H:plastoquinone, via FMN and iron-sulfur (Fe-S) centers, to quinones in the photosynthetic chain and possibly in a chloroplast respiratory chain. The immediate electron acceptor for the enzyme in this species is believed to be plastoquinone. Couples the redox reaction to proton translocation, and thus conserves the redox energy in a proton gradient. The polypeptide is NAD(P)H-quinone oxidoreductase subunit H, chloroplastic (Anthoceros angustus (Hornwort)).